Consider the following 162-residue polypeptide: Lectin BRA-3 (162 aa).

A signal peptide spans 1–24; the sequence is MQRSEIVQAVTLLVVVFAITTAEC. The region spanning 25–152 is the C-type lectin domain; the sequence is TCPGNLDWQE…NKNKNFLCKM (128 aa). 3 disulfides stabilise this stretch: C26–C39, C56–C150, and C125–C142.

Homotetramer; disulfide-linked. Coelemic fluid.

In terms of biological role, sugar-binding protein which recognizes specific carbohydrate structures and agglutinates a variety of animal cells by binding to cell-surface glycoproteins and glycolipids. Calcium-dependent lectin. Invertebrate lectins may be involved in defense functions. This chain is Lectin BRA-3, found in Megabalanus rosa (Acorn barnacle).